The chain runs to 118 residues: MEKPQIELPVGPAPEDLVISDIIVGEGAEARPGGEVEVHYVGVDFETGEEFDSSWDRGQTSQFPLNGLIAGWQEGIPGMKVGGRRQLTIPPEAAYGPEGSGHPLSGRTLVFIIDLISA.

One can recognise a PPIase FKBP-type domain in the interval 33-118; that stretch reads GGEVEVHYVG…LVFIIDLISA (86 aa).

Belongs to the FKBP-type PPIase family.

The enzyme catalyses [protein]-peptidylproline (omega=180) = [protein]-peptidylproline (omega=0). Functionally, PPIases accelerate the folding of proteins. This chain is Probable FK506-binding protein, found in Corynebacterium glutamicum (strain ATCC 13032 / DSM 20300 / JCM 1318 / BCRC 11384 / CCUG 27702 / LMG 3730 / NBRC 12168 / NCIMB 10025 / NRRL B-2784 / 534).